A 154-amino-acid chain; its full sequence is UPF0756 membrane protein YtwI (154 aa).

Transmembrane regions (helical) follow at residues 8-28 (FLIL…LFAV), 54-74 (WGVT…EIGF), 87-107 (WIAL…LTLL), and 117-137 (LVIG…GPLI).

This sequence belongs to the UPF0756 family.

It localises to the cell membrane. The polypeptide is UPF0756 membrane protein YtwI (ytwI) (Bacillus subtilis (strain 168)).